Here is an 820-residue protein sequence, read N- to C-terminus: Phosphoenolpyruvate synthase (820 aa).

H438 acts as the Tele-phosphohistidine intermediate in catalysis. Residues R539, R587, E689, G710, S711, N712, and D713 each contribute to the substrate site. E689 is a binding site for Mg(2+). Mg(2+) is bound at residue D713. C762 serves as the catalytic Proton donor.

Belongs to the PEP-utilizing enzyme family. The cofactor is Mg(2+).

It carries out the reaction pyruvate + ATP + H2O = phosphoenolpyruvate + AMP + phosphate + 2 H(+). It functions in the pathway carbohydrate biosynthesis; gluconeogenesis. Functionally, catalyzes the phosphorylation of pyruvate to phosphoenolpyruvate. The polypeptide is Phosphoenolpyruvate synthase (ppsA) (Aeropyrum pernix (strain ATCC 700893 / DSM 11879 / JCM 9820 / NBRC 100138 / K1)).